A 146-amino-acid chain; its full sequence is 3-hydroxyacyl-[acyl-carrier-protein] dehydratase FabZ (146 aa).

His-49 is an active-site residue.

This sequence belongs to the thioester dehydratase family. FabZ subfamily.

The protein localises to the cytoplasm. It carries out the reaction a (3R)-hydroxyacyl-[ACP] = a (2E)-enoyl-[ACP] + H2O. Its function is as follows. Involved in unsaturated fatty acids biosynthesis. Catalyzes the dehydration of short chain beta-hydroxyacyl-ACPs and long chain saturated and unsaturated beta-hydroxyacyl-ACPs. The sequence is that of 3-hydroxyacyl-[acyl-carrier-protein] dehydratase FabZ from Pseudomonas savastanoi pv. phaseolicola (strain 1448A / Race 6) (Pseudomonas syringae pv. phaseolicola (strain 1448A / Race 6)).